A 90-amino-acid polypeptide reads, in one-letter code: Putative UPF0401 protein YpjI (90 aa).

This sequence belongs to the UPF0401 family.

The chain is Putative UPF0401 protein YpjI (ypjI) from Escherichia coli (strain K12).